The chain runs to 148 residues: Putative transmembrane protein ORF23 (148 aa).

Residues 1–18 form the signal peptide; it reads MVIILLGVSIVVPGLFLA. Residues 19–118 lie on the Extracellular side of the membrane; sequence TETPQTNTFE…YVGWPSGAET (100 aa). A helical membrane pass occupies residues 119–139; sequence IITNIADIIIMATAVMIIGAI. Topologically, residues 140–148 are cytoplasmic; the sequence is YTGYKVSIK.

Its subcellular location is the host membrane. This His1 virus (isolate Australia/Victoria) (His1V) protein is Putative transmembrane protein ORF23.